The sequence spans 458 residues: Tol-Pal system protein TolB (458 aa).

The N-terminal stretch at 1 to 23 (MSSVIRKWALTALMAVSSTALFA) is a signal peptide.

Belongs to the TolB family. As to quaternary structure, the Tol-Pal system is composed of five core proteins: the inner membrane proteins TolA, TolQ and TolR, the periplasmic protein TolB and the outer membrane protein Pal. They form a network linking the inner and outer membranes and the peptidoglycan layer.

Its subcellular location is the periplasm. Functionally, part of the Tol-Pal system, which plays a role in outer membrane invagination during cell division and is important for maintaining outer membrane integrity. In Zymomonas mobilis subsp. mobilis (strain ATCC 31821 / ZM4 / CP4), this protein is Tol-Pal system protein TolB.